A 335-amino-acid polypeptide reads, in one-letter code: Biotin synthase (335 aa).

Positions 51–278 (NTVQLSSLLS…LAKVRLSAGR (228 aa)) constitute a Radical SAM core domain. Residues Cys-66, Cys-70, and Cys-73 each contribute to the [4Fe-4S] cluster site. Residues Cys-110, Cys-141, Cys-201, and Arg-273 each contribute to the [2Fe-2S] cluster site.

This sequence belongs to the radical SAM superfamily. Biotin synthase family. As to quaternary structure, homodimer. It depends on [4Fe-4S] cluster as a cofactor. The cofactor is [2Fe-2S] cluster.

It carries out the reaction (4R,5S)-dethiobiotin + (sulfur carrier)-SH + 2 reduced [2Fe-2S]-[ferredoxin] + 2 S-adenosyl-L-methionine = (sulfur carrier)-H + biotin + 2 5'-deoxyadenosine + 2 L-methionine + 2 oxidized [2Fe-2S]-[ferredoxin]. Its pathway is cofactor biosynthesis; biotin biosynthesis; biotin from 7,8-diaminononanoate: step 2/2. Its function is as follows. Catalyzes the conversion of dethiobiotin (DTB) to biotin by the insertion of a sulfur atom into dethiobiotin via a radical-based mechanism. This Bordetella pertussis (strain Tohama I / ATCC BAA-589 / NCTC 13251) protein is Biotin synthase.